Reading from the N-terminus, the 223-residue chain is AMSH-like ubiquitin thioesterase 2 (223 aa).

Residues 49-177 (VHISERLLED…YGIFKLTDPG (129 aa)) enclose the MPN domain. The Zn(2+) site is built by H127, H129, D140, H142, C185, H191, and H193. The short motif at 127-140 (HTHPSQGCFMSSVD) is the JAMM motif element.

Belongs to the peptidase M67C family. It depends on Zn(2+) as a cofactor.

Zinc metalloprotease that cleaves 'Lys-48'- and 'Lys-63'-linked polyubiquitin chains. The protein is AMSH-like ubiquitin thioesterase 2 (AMSH2) of Arabidopsis thaliana (Mouse-ear cress).